A 435-amino-acid polypeptide reads, in one-letter code: Apparent malate synthase (435 aa).

2 residues coordinate Mg(2+): Glu159 and Asn180. Glu159 is a substrate binding site.

It belongs to the HpcH/HpaI aldolase family. Mg(2+) serves as cofactor. The cofactor is Mn(2+). Co(2+) is required as a cofactor. It depends on Ca(2+) as a cofactor.

The enzyme catalyses (S)-malyl-CoA = glyoxylate + acetyl-CoA. It catalyses the reaction (S)-malyl-CoA + H2O = (S)-malate + CoA + H(+). Its function is as follows. Involved in the methylaspartate cycle. Catalyzes the biosynthesis of malate in two steps. In the first reaction acetyl-CoA is condensed reversibly with glyoxylate to form (S)-malyl-CoA. In the second reaction (S)-malyl-CoA is hydrolyzed to malate and CoA. It can also catalyze the condensation of propionyl-CoA with glyoxylate and of acetyl-CoA with pyruvate, however the CoA-ester hydrolysis reaction is highly specific for (S)-malyl-CoA. This Haloarcula marismortui (strain ATCC 43049 / DSM 3752 / JCM 8966 / VKM B-1809) (Halobacterium marismortui) protein is Apparent malate synthase (aceB).